The sequence spans 185 residues: Hypoxanthine/guanine phosphoribosyltransferase (185 aa).

This sequence belongs to the purine/pyrimidine phosphoribosyltransferase family. Archaeal HPRT subfamily. Homodimer.

It localises to the cytoplasm. The catalysed reaction is IMP + diphosphate = hypoxanthine + 5-phospho-alpha-D-ribose 1-diphosphate. It catalyses the reaction GMP + diphosphate = guanine + 5-phospho-alpha-D-ribose 1-diphosphate. Its pathway is purine metabolism; IMP biosynthesis via salvage pathway; IMP from hypoxanthine: step 1/1. Its function is as follows. Catalyzes a salvage reaction resulting in the formation of IMP that is energically less costly than de novo synthesis. This is Hypoxanthine/guanine phosphoribosyltransferase from Aciduliprofundum boonei (strain DSM 19572 / T469).